Consider the following 865-residue polypeptide: DNA-directed RNA polymerase subunit Rpo1N (865 aa).

The Zn(2+) site is built by Cys60, Cys63, Cys70, His73, Cys100, Cys103, Cys146, and Cys149. Positions 451, 453, and 455 each coordinate Mg(2+). A disordered region spans residues 500–531 (EHTSSQGKRLFSVRSRPPDPQEGRAPPPDREG). Positions 515–531 (RPPDPQEGRAPPPDREG) are enriched in basic and acidic residues.

The protein belongs to the RNA polymerase beta' chain family. Part of the RNA polymerase complex. Mg(2+) is required as a cofactor. The cofactor is Zn(2+).

The protein localises to the cytoplasm. It carries out the reaction RNA(n) + a ribonucleoside 5'-triphosphate = RNA(n+1) + diphosphate. Its function is as follows. DNA-dependent RNA polymerase (RNAP) catalyzes the transcription of DNA into RNA using the four ribonucleoside triphosphates as substrates. Forms the clamp head domain. This chain is DNA-directed RNA polymerase subunit Rpo1N, found in Methanothermobacter thermautotrophicus (strain Winter) (Methanobacterium thermoautotrophicum).